We begin with the raw amino-acid sequence, 368 residues long: Cobalt-precorrin-5B C(1)-methyltransferase (368 aa).

Belongs to the CbiD family.

It catalyses the reaction Co-precorrin-5B + S-adenosyl-L-methionine = Co-precorrin-6A + S-adenosyl-L-homocysteine. It participates in cofactor biosynthesis; adenosylcobalamin biosynthesis; cob(II)yrinate a,c-diamide from sirohydrochlorin (anaerobic route): step 6/10. Catalyzes the methylation of C-1 in cobalt-precorrin-5B to form cobalt-precorrin-6A. This Brucella abortus (strain S19) protein is Cobalt-precorrin-5B C(1)-methyltransferase.